Reading from the N-terminus, the 215-residue chain is Probable GTP-binding protein EngB (215 aa).

The EngB-type G domain maps to 26-200 (EGIEVAFAGR…RAKLDEWFAP (175 aa)). GTP contacts are provided by residues 34-41 (GRSNAGKS), 61-65 (GRTQL), 79-82 (DLPG), 146-149 (TKAD), and 179-181 (FSS). Residues Ser41 and Thr63 each contribute to the Mg(2+) site.

This sequence belongs to the TRAFAC class TrmE-Era-EngA-EngB-Septin-like GTPase superfamily. EngB GTPase family. It depends on Mg(2+) as a cofactor.

Necessary for normal cell division and for the maintenance of normal septation. This Aliivibrio fischeri (strain ATCC 700601 / ES114) (Vibrio fischeri) protein is Probable GTP-binding protein EngB.